The chain runs to 249 residues: Adenylate kinase (249 aa).

An ATP-binding site is contributed by 43 to 48 (GAGKGT). Residues 63–92 (ATGDMLRAQVAAKTALGVEAKKIMDQGGLV) form an NMP region. AMP-binding positions include threonine 64, arginine 69, 90–92 (GLV), 119–122 (GFPR), and glutamine 126. Residues 160–197 (GRLVHPASGRSYHKLFNPPKKNMIDDITGEPLVQRSDD) are LID. ATP is bound by residues arginine 161 and 170–171 (SY). 2 residues coordinate AMP: arginine 194 and arginine 205. An ATP-binding site is contributed by glutamine 233.

The protein belongs to the adenylate kinase family. AK2 subfamily. Monomer.

Its subcellular location is the cytoplasm. The protein resides in the cytosol. It is found in the mitochondrion intermembrane space. It carries out the reaction AMP + ATP = 2 ADP. Its function is as follows. Catalyzes the reversible transfer of the terminal phosphate group between ATP and AMP. Plays an important role in cellular energy homeostasis and in adenine nucleotide metabolism. Adenylate kinase activity is critical for regulation of the phosphate utilization and the AMP de novo biosynthesis pathways. In Scheffersomyces stipitis (strain ATCC 58785 / CBS 6054 / NBRC 10063 / NRRL Y-11545) (Yeast), this protein is Adenylate kinase.